Reading from the N-terminus, the 611-residue chain is RAC serine/threonine-protein kinase (611 aa).

Residues 14–25 (VVASAPAPGSAS) show a composition bias toward low complexity. Disordered regions lie at residues 14–33 (VVAS…SPTT) and 45–88 (QSTH…NTTF). Residue serine 30 is modified to Phosphoserine. Residues 106 to 211 (QVVKEGWLMK…WTEAIRNVSS (106 aa)) form the PH domain. One can recognise a Protein kinase domain in the interval 266–523 (FEFLKVLGKG…VKEIQAHPFF (258 aa)). Residues 272 to 280 (LGKGTFGKV) and lysine 295 contribute to the ATP site. Residue aspartate 389 is the Proton acceptor of the active site. One can recognise an AGC-kinase C-terminal domain in the interval 524-597 (ASINWTDLVL…QGDMASTLGT (74 aa)). Serine 586 bears the Phosphoserine mark.

It belongs to the protein kinase superfamily. AGC Ser/Thr protein kinase family. RAC subfamily. As to quaternary structure, interacts with trbl. Post-translationally, phosphorylated and activated by Pk61C/PDK1. Phosphorylated on Ser-586 by the TORC2 complex. Ubiquitously expressed. Present in ovary, where it is concentrated at the basal side of follicle cells.

Its subcellular location is the cytoplasm. It is found in the cytosol. It localises to the cell membrane. It carries out the reaction L-seryl-[protein] + ATP = O-phospho-L-seryl-[protein] + ADP + H(+). The catalysed reaction is L-threonyl-[protein] + ATP = O-phospho-L-threonyl-[protein] + ADP + H(+). Functionally, serine/threonine kinase involved in various developmental processes. During early embryogenesis, acts as a survival protein. During mid-embryogenesis, phosphorylates and activates trh, a transcription factor required for tracheal cell fate determination. Also regulates tracheal cell migration. Later in development, acts downstream of PI3K and Pk61C/PDK1 in the insulin receptor transduction pathway which regulates cell growth and organ size, by phosphorylating and antagonizing FOXO transcription factor. Controls follicle cell size during oogenesis. May also stimulate cell growth by phosphorylating Gig/Tsc2 and inactivating the Tsc complex. Dephosphorylation of 'Ser-586' by Phlpp triggers apoptosis and suppression of tumor growth. The protein is RAC serine/threonine-protein kinase of Drosophila melanogaster (Fruit fly).